A 662-amino-acid chain; its full sequence is Acetyl-coenzyme A synthetase (662 aa).

CoA contacts are provided by residues 197–200 and T317; that span reads RKGK. ATP is bound by residues 393–395, 417–422, D510, and R525; these read GEP and DTWWQT. Position 533 (S533) interacts with CoA. R536 provides a ligand contact to ATP. Mg(2+) is bound by residues H549 and V552. K623 carries the post-translational modification N6-acetyllysine.

This sequence belongs to the ATP-dependent AMP-binding enzyme family. It depends on Mg(2+) as a cofactor. Acetylated. Deacetylation by the SIR2-homolog deacetylase activates the enzyme.

The enzyme catalyses acetate + ATP + CoA = acetyl-CoA + AMP + diphosphate. Functionally, catalyzes the conversion of acetate into acetyl-CoA (AcCoA), an essential intermediate at the junction of anabolic and catabolic pathways. AcsA undergoes a two-step reaction. In the first half reaction, AcsA combines acetate with ATP to form acetyl-adenylate (AcAMP) intermediate. In the second half reaction, it can then transfer the acetyl group from AcAMP to the sulfhydryl group of CoA, forming the product AcCoA. The protein is Acetyl-coenzyme A synthetase of Helicobacter pylori (strain P12).